We begin with the raw amino-acid sequence, 106 residues long: Large ribosomal subunit protein eL42 (106 aa).

The interval 34-53 (YAQGKRRYDRKQSGYGGQTK) is disordered.

The protein belongs to the eukaryotic ribosomal protein eL42 family. As to quaternary structure, component of the large ribosomal subunit.

It is found in the cytoplasm. Its function is as follows. Component of the large ribosomal subunit. The ribosome is a large ribonucleoprotein complex responsible for the synthesis of proteins in the cell. The sequence is that of Large ribosomal subunit protein eL42 (Rpl36a) from Canis lupus familiaris (Dog).